Here is a 215-residue protein sequence, read N- to C-terminus: Cytochrome b6 (215 aa).

The chain crosses the membrane as a helical span at residues 32–52 (IFYCLGGITLTCFLVQVATGF). Cysteine 35 contributes to the heme c binding site. Heme b-binding residues include histidine 86 and histidine 100. 3 consecutive transmembrane segments (helical) span residues 90-110 (ASMMVLMMILHVFRVYLTGGF), 116-136 (LTWVTGVVLAVLTASFGVTGY), and 186-206 (LHTFVLPLLTAVFMLMHFLMI). Heme b is bound by residues histidine 187 and histidine 202.

This sequence belongs to the cytochrome b family. PetB subfamily. The 4 large subunits of the cytochrome b6-f complex are cytochrome b6, subunit IV (17 kDa polypeptide, PetD), cytochrome f and the Rieske protein, while the 4 small subunits are PetG, PetL, PetM and PetN. The complex functions as a dimer. It depends on heme b as a cofactor. The cofactor is heme c.

The protein localises to the plastid. It localises to the chloroplast thylakoid membrane. Functionally, component of the cytochrome b6-f complex, which mediates electron transfer between photosystem II (PSII) and photosystem I (PSI), cyclic electron flow around PSI, and state transitions. In Oenothera elata subsp. hookeri (Hooker's evening primrose), this protein is Cytochrome b6.